A 295-amino-acid polypeptide reads, in one-letter code: Putative aquaporin-12B (295 aa).

Over 1-22 (MAGLNVSLSFFFATFTLCEAAR) the chain is Cytoplasmic. The chain crosses the membrane as a helical span at residues 23–41 (RASKALLPVGAYEVFAREA). The Extracellular segment spans residues 42-55 (MRTLVELGPWAGDF). Residues 56-74 (GPDLLLTLLFLLFLAHGVT) traverse the membrane as a helical segment. Topologically, residues 75–76 (LD) are cytoplasmic. The discontinuously helical intramembrane region spans 77 to 114 (GASANPTVSLQEFLMAEESLPGTLLKLAAQGLGMQAAC). Positions 81 to 83 (NPT) match the NPA 1 motif. Residues 115–120 (TLTRLC) are Cytoplasmic-facing. The helical transmembrane segment at 121–142 (WAWELSDLHLLQSLMAQSCSSA) threads the bilayer. The Extracellular portion of the chain corresponds to 143–145 (LRT). The helical transmembrane segment at 146-166 (SVPHGALVEAACAFCFHLTLL) threads the bilayer. The Cytoplasmic segment spans residues 167–174 (HLRHSPPA). A helical transmembrane segment spans residues 175 to 191 (YSGPAVALLVTVTAYTA). At 192 to 194 (GPF) the chain is on the extracellular side. Residues 195 to 206 (TSAFFNPALAAS) constitute an intramembrane region (discontinuously helical). Residues 200–202 (NPA) carry the NPA 2 motif. The Extracellular portion of the chain corresponds to 207–223 (VTFACSGHTLLEYVQVY). Residues 224 to 244 (WLGPLTGMVLAVLLHQGRLPH) traverse the membrane as a helical segment. Residues 245-295 (LFQRNLFYGQKNKYRAPRGKPAPASGDTQTPAKGSSVREPGRSGVEGPHSS) are Cytoplasmic-facing. The tract at residues 257 to 295 (KYRAPRGKPAPASGDTQTPAKGSSVREPGRSGVEGPHSS) is disordered.

This sequence belongs to the MIP/aquaporin (TC 1.A.8) family. AQP11/AQP12 subfamily. As to quaternary structure, homotetramer; each monomer provides an independent water pore.

The protein resides in the membrane. The catalysed reaction is H2O(in) = H2O(out). Putative aquaporin. Could form homotetrameric transmembrane channels, with each monomer independently mediating water transport across the plasma membrane along its osmotic gradient. This chain is Putative aquaporin-12B, found in Homo sapiens (Human).